We begin with the raw amino-acid sequence, 240 residues long: tRNA (guanine-N(1)-)-methyltransferase (240 aa).

Residues G111 and 130–135 (IGDYVI) contribute to the S-adenosyl-L-methionine site.

It belongs to the RNA methyltransferase TrmD family. As to quaternary structure, homodimer.

Its subcellular location is the cytoplasm. It carries out the reaction guanosine(37) in tRNA + S-adenosyl-L-methionine = N(1)-methylguanosine(37) in tRNA + S-adenosyl-L-homocysteine + H(+). Specifically methylates guanosine-37 in various tRNAs. In Mycoplasma capricolum subsp. capricolum (strain California kid / ATCC 27343 / NCTC 10154), this protein is tRNA (guanine-N(1)-)-methyltransferase.